Consider the following 252-residue polypeptide: Type II secretion system protein N (252 aa).

Residues 1 to 4 (MKQK) lie on the Cytoplasmic side of the membrane. A helical transmembrane segment spans residues 5–25 (VLIAALFLVAYLGFLLVKLPA). At 26–252 (TLVVRHLPLP…RFPLRYQGRI (227 aa)) the chain is on the periplasmic side.

The protein belongs to the GSP N family.

It is found in the cell inner membrane. Functionally, involved in a type II secretion system (T2SS, formerly general secretion pathway, GSP) for the export of proteins. The sequence is that of Type II secretion system protein N (exeN) from Aeromonas hydrophila.